The primary structure comprises 584 residues: Isopropyl malate synthase htyA (584 aa).

The Pyruvate carboxyltransferase domain occupies 39-317 (PIWLSTDLRD…ETGLDFSNLP (279 aa)).

Belongs to the alpha-IPM synthase/homocitrate synthase family. LeuA type 2 subfamily.

It catalyses the reaction 3-methyl-2-oxobutanoate + acetyl-CoA + H2O = (2S)-2-isopropylmalate + CoA + H(+). Its pathway is antifungal biosynthesis. Functionally, isopropyl malate synthase; part of the gene cluster that mediates the de novo generation of L-homotyrosine from acetyl-CoA and 4-hydroxyphenyl-pyruvate. L-homotyrosine is a building block of echinocandin B, a fungal lipidated cyclic hexapeptide that acts as an antifungal agent. L-homotyrosine 4-hydroxyphenyl-pyruvate first undergoes an aldol-type condensation by htyA with the C-2 of acetyl-CoA followed by the release of CoA to form 2-(4-hydroxybenzyl)-malate. This is followed by isomerization of 2-(4-hydroxy-benzyl)-malate to 3-(4-hydroxybenzyl)-malate by htyD. Thereafter, 3-(4-hydroxybenzyl)-malate undergoes decarboxylation and oxidation to form 2-oxo-4-(4-hydroxybenzyl)butanoic acid, coupled to reduction of NAD(+) to NADH by htyC. The product then undergoes transamination catalyzed by htyB to form L-homotyrosine. This is Isopropyl malate synthase htyA from Aspergillus rugulosus (Emericella rugulosa).